Reading from the N-terminus, the 315-residue chain is Olfactory receptor 51L1 (315 aa).

Over 1-27 (MGDWNNSDAVEPIFILRGFPGLEYVHS) the chain is Extracellular. N-linked (GlcNAc...) asparagine glycosylation is present at N5. A helical membrane pass occupies residues 28–48 (WLSILFCLAYLVAFMGNVTIL). Over 49 to 56 (SVIWIESS) the chain is Cytoplasmic. Residues 57–77 (LHQPMYYFISILAVNDLGMSL) form a helical membrane-spanning segment. At 78 to 101 (STLPTMLAVLWLDAPEIQASACYA) the chain is on the extracellular side. An intrachain disulfide couples C99 to C191. Residues 102–122 (QLFFIHTFTFLESSVLLAMAF) form a helical membrane-spanning segment. Residues 123 to 141 (DRFVAICHPLHYPTILTNS) are Cytoplasmic-facing. Residues 142-162 (VIGKIGLACLLRSLGVVLPTP) traverse the membrane as a helical segment. Topologically, residues 163–198 (LLLRHYHYCHGNALSHAFCLHQDVLRLSCTDARTNS) are extracellular. The helical transmembrane segment at 199–219 (IYGLCVVIATLGVDSIFILLS) threads the bilayer. Residues 220–239 (YVLILNTVLDIASREEQLKA) are Cytoplasmic-facing. A helical transmembrane segment spans residues 240-260 (LNTCVSHICVVLIFFVPVIGV). Residues 261 to 275 (SMVHRFGKHLSPIVH) are Extracellular-facing. The chain crosses the membrane as a helical span at residues 276-296 (ILMADIYLLLPPVLNPIVYSV). Over 297–315 (RTKQIRLGILHKFVLRRRF) the chain is Cytoplasmic.

The protein belongs to the G-protein coupled receptor 1 family.

It localises to the cell membrane. In terms of biological role, odorant receptor. This chain is Olfactory receptor 51L1 (OR51L1), found in Homo sapiens (Human).